The primary structure comprises 461 residues: ATP synthase subunit beta (461 aa).

G151 to T158 is an ATP binding site.

Belongs to the ATPase alpha/beta chains family. In terms of assembly, F-type ATPases have 2 components, CF(1) - the catalytic core - and CF(0) - the membrane proton channel. CF(1) has five subunits: alpha(3), beta(3), gamma(1), delta(1), epsilon(1). CF(0) has three main subunits: a(1), b(2) and c(9-12). The alpha and beta chains form an alternating ring which encloses part of the gamma chain. CF(1) is attached to CF(0) by a central stalk formed by the gamma and epsilon chains, while a peripheral stalk is formed by the delta and b chains.

It is found in the cell inner membrane. The catalysed reaction is ATP + H2O + 4 H(+)(in) = ADP + phosphate + 5 H(+)(out). Its function is as follows. Produces ATP from ADP in the presence of a proton gradient across the membrane. The catalytic sites are hosted primarily by the beta subunits. In Pseudoalteromonas translucida (strain TAC 125), this protein is ATP synthase subunit beta.